Reading from the N-terminus, the 259-residue chain is tRNA-cytidine(32) 2-sulfurtransferase (259 aa).

A PP-loop motif motif is present at residues 37–42; that stretch reads SGGKDS. [4Fe-4S] cluster is bound by residues C112, C115, and C202.

The protein belongs to the TtcA family. Homodimer. The cofactor is Mg(2+). [4Fe-4S] cluster is required as a cofactor.

It is found in the cytoplasm. It carries out the reaction cytidine(32) in tRNA + S-sulfanyl-L-cysteinyl-[cysteine desulfurase] + AH2 + ATP = 2-thiocytidine(32) in tRNA + L-cysteinyl-[cysteine desulfurase] + A + AMP + diphosphate + H(+). It participates in tRNA modification. Functionally, catalyzes the ATP-dependent 2-thiolation of cytidine in position 32 of tRNA, to form 2-thiocytidine (s(2)C32). The sulfur atoms are provided by the cysteine/cysteine desulfurase (IscS) system. The protein is tRNA-cytidine(32) 2-sulfurtransferase of Syntrophotalea carbinolica (strain DSM 2380 / NBRC 103641 / GraBd1) (Pelobacter carbinolicus).